A 153-amino-acid polypeptide reads, in one-letter code: uncharacterized protein (153 aa).

Positions 1–18 (MSARISKQLRLSVPPCLA) are cleaved as a signal peptide. Residues N19 and N25 are each glycosylated (N-linked (GlcNAc...) asparagine). At 19-43 (NRTTASNSSSCVTEVEPLLQSFSST) the chain is on the extracellular side. Residues 44-64 (LVLIVLATVIFCLVVLSLSTF) form a helical membrane-spanning segment. Residues 65 to 153 (HMHKSKMKKR…EHLQQSVVLS (89 aa)) are Cytoplasmic-facing. The tract at residues 75-115 (KIEKAQEEYERDHCSPKAERGHLHGMGRGGTHGSPTSPTIQ) is disordered. Basic and acidic residues predominate over residues 77 to 96 (EKAQEEYERDHCSPKAERGH).

It localises to the membrane. This is an uncharacterized protein from Xenopus tropicalis (Western clawed frog).